A 1243-amino-acid chain; its full sequence is Membrane-associated phosphatidylinositol transfer protein 1 (1243 aa).

Thr59, Thr282, and Thr287 each carry phosphothreonine. Positions 259 to 330 (CNTGSEGPEA…HGGGVSPQSL (72 aa)) are disordered. Residues 271-283 (PGKSSTEARPGTS) are compositionally biased toward polar residues. Over residues 299–319 (ASPDASFGKQWSSSSRSSYSS) the composition is skewed to low complexity. Ser300, Ser304, Ser319, Ser326, Ser329, Ser342, Ser345, Ser346, and Ser373 each carry phosphoserine. Ser382 carries the post-translational modification Phosphoserine; by CDK1. Residues 581–593 (AGPGSRGSSRRGS) are compositionally biased toward low complexity. Residues 581–679 (AGPGSRGSSR…PASSEAPDGP (99 aa)) are disordered. A phosphoserine mark is found at Ser593, Ser600, and Ser621. Residues 643–658 (GSQNSLQVASTATSSG) show a composition bias toward polar residues. In terms of domain architecture, DDHD spans 684–878 (RLDFKVSGFF…VVAFILRQVI (195 aa)). Phosphoserine is present on Ser895. Residues 1206-1243 (LLRSRGPSQVDREGPGTPPTTLARGKTRSISLKLDSEE) are disordered. Arg1210 and Arg1217 each carry omega-N-methylarginine. Position 1236 is a phosphoserine (Ser1236).

Belongs to the PtdIns transfer protein family. PI transfer class IIA subfamily. As to quaternary structure, interacts with PTK2B via its C-terminus. Interacts with RHOA. Has higher affinity for the inactive, GDP-bound form of RHOA. The CDK1-phosphorylated form interacts with PLK1. Interacts with VAPB and PIK4CA. Phosphorylated on multiple sites by CDK1 at the onset of mitosis. Phosphorylation facilitates dissociation from the Golgi complex and is required for interaction with PLK1. In terms of processing, phosphorylated on threonine residues upon treatment with oleic acid. Post-translationally, phosphorylated on tyrosine residues by PTK2B. In terms of tissue distribution, detected at high levels in brain, and at lower levels in lung, kidney, spleen and liver (at protein level). Ubiquitous. Highly expressed in embryonic retina and the central nervous system.

The protein localises to the cytoplasm. Its subcellular location is the golgi apparatus. It localises to the golgi stack membrane. It is found in the endoplasmic reticulum membrane. The protein resides in the lipid droplet. The protein localises to the cleavage furrow. Its subcellular location is the midbody. The catalysed reaction is a 1,2-diacyl-sn-glycero-3-phospho-(1D-myo-inositol)(in) = a 1,2-diacyl-sn-glycero-3-phospho-(1D-myo-inositol)(out). In terms of biological role, catalyzes the transfer of phosphatidylinositol (PI) between membranes. Binds PI. Also binds phosphatidylcholine (PC) and phosphatidic acid (PA) with the binding affinity order of PI &gt; PA &gt; PC. Regulates RHOA activity, and plays a role in cytoskeleton remodeling. Necessary for normal completion of cytokinesis. Plays a role in maintaining normal diacylglycerol levels in the Golgi apparatus. Necessary for maintaining the normal structure of the endoplasmic reticulum and the Golgi apparatus. Required for protein export from the endoplasmic reticulum and the Golgi. Binds calcium ions. The chain is Membrane-associated phosphatidylinositol transfer protein 1 (Pitpnm1) from Mus musculus (Mouse).